The primary structure comprises 138 residues: ATP synthase epsilon chain (138 aa).

It belongs to the ATPase epsilon chain family. As to quaternary structure, F-type ATPases have 2 components, CF(1) - the catalytic core - and CF(0) - the membrane proton channel. CF(1) has five subunits: alpha(3), beta(3), gamma(1), delta(1), epsilon(1). CF(0) has three main subunits: a, b and c.

It is found in the cell inner membrane. In terms of biological role, produces ATP from ADP in the presence of a proton gradient across the membrane. The sequence is that of ATP synthase epsilon chain from Psychrobacter arcticus (strain DSM 17307 / VKM B-2377 / 273-4).